The sequence spans 417 residues: uncharacterized protein (417 aa).

Residues 10 to 30 (ALVCFSILSILVLACGCVNTP) traverse the membrane as a helical segment. Positions 84-106 (QENHPLQSNQNYEQTNGNFNEEN) are disordered. Residues 86–106 (NHPLQSNQNYEQTNGNFNEEN) show a composition bias toward polar residues. Residues 148–168 (LYYIKVIDPIVGGLAGIDIYV) form a helical membrane-spanning segment.

The protein resides in the cell membrane. This is an uncharacterized protein from Methanocaldococcus jannaschii (strain ATCC 43067 / DSM 2661 / JAL-1 / JCM 10045 / NBRC 100440) (Methanococcus jannaschii).